The following is a 321-amino-acid chain: HPr kinase/phosphorylase (321 aa).

Residues histidine 143 and lysine 164 contribute to the active site. Glycine 158–serine 165 lines the ATP pocket. Residue serine 165 coordinates Mg(2+). The active-site Proton acceptor; for phosphorylation activity. Proton donor; for dephosphorylation activity is the aspartate 182. The important for the catalytic mechanism of both phosphorylation and dephosphorylation stretch occupies residues methionine 206–asparagine 215. Glutamate 207 is a binding site for Mg(2+). Residue arginine 248 is part of the active site. Residues proline 269 to arginine 274 are important for the catalytic mechanism of dephosphorylation.

Belongs to the HPrK/P family. Homohexamer. Mg(2+) serves as cofactor.

It carries out the reaction [HPr protein]-L-serine + ATP = [HPr protein]-O-phospho-L-serine + ADP + H(+). The catalysed reaction is [HPr protein]-O-phospho-L-serine + phosphate + H(+) = [HPr protein]-L-serine + diphosphate. Functionally, catalyzes the ATP- as well as the pyrophosphate-dependent phosphorylation of a specific serine residue in HPr, a phosphocarrier protein of the phosphoenolpyruvate-dependent sugar phosphotransferase system (PTS). HprK/P also catalyzes the pyrophosphate-producing, inorganic phosphate-dependent dephosphorylation (phosphorolysis) of seryl-phosphorylated HPr (P-Ser-HPr). The protein is HPr kinase/phosphorylase of Leptospira interrogans serogroup Icterohaemorrhagiae serovar copenhageni (strain Fiocruz L1-130).